The following is a 239-amino-acid chain: Purine nucleoside phosphorylase DeoD-type 1 (239 aa).

Position 5 (histidine 5) interacts with a purine D-ribonucleoside. Phosphate contacts are provided by residues glycine 21, arginine 25, arginine 44, and 88-91; that span reads RVGS. A purine D-ribonucleoside-binding positions include 180 to 182 and 204 to 205; these read EME and SD. The active-site Proton donor is aspartate 205.

Belongs to the PNP/UDP phosphorylase family. Homohexamer; trimer of homodimers.

The enzyme catalyses a purine D-ribonucleoside + phosphate = a purine nucleobase + alpha-D-ribose 1-phosphate. It carries out the reaction a purine 2'-deoxy-D-ribonucleoside + phosphate = a purine nucleobase + 2-deoxy-alpha-D-ribose 1-phosphate. Its function is as follows. Catalyzes the reversible phosphorolytic breakdown of the N-glycosidic bond in the beta-(deoxy)ribonucleoside molecules, with the formation of the corresponding free purine bases and pentose-1-phosphate. The protein is Purine nucleoside phosphorylase DeoD-type 1 of Vibrio parahaemolyticus serotype O3:K6 (strain RIMD 2210633).